A 192-amino-acid chain; its full sequence is Glycerol-3-phosphate acyltransferase (192 aa).

Transmembrane regions (helical) follow at residues 4 to 24, 48 to 68, 74 to 94, 101 to 121, and 125 to 145; these read FAIIYMLFTYLLGSISSDVVI, LVLVVFLCDVLKGMLPVWVGY, YFELGMVALAACLGHIFPIFF, GVATAFGAIAPIAWGVAGSML, and LLIFLFSGYVALSTVVTALIL.

The protein belongs to the PlsY family. In terms of assembly, probably interacts with PlsX.

It localises to the cell inner membrane. The catalysed reaction is an acyl phosphate + sn-glycerol 3-phosphate = a 1-acyl-sn-glycero-3-phosphate + phosphate. Its pathway is lipid metabolism; phospholipid metabolism. Functionally, catalyzes the transfer of an acyl group from acyl-phosphate (acyl-PO(4)) to glycerol-3-phosphate (G3P) to form lysophosphatidic acid (LPA). This enzyme utilizes acyl-phosphate as fatty acyl donor, but not acyl-CoA or acyl-ACP. This is Glycerol-3-phosphate acyltransferase from Histophilus somni (strain 129Pt) (Haemophilus somnus).